Here is a 220-residue protein sequence, read N- to C-terminus: Ribose-5-phosphate isomerase A (220 aa).

Substrate contacts are provided by residues 25–28 (TGST), 80–83 (DGAD), and 93–96 (KGGG). E102 (proton acceptor) is an active-site residue. K120 contacts substrate.

This sequence belongs to the ribose 5-phosphate isomerase family. Homodimer.

The enzyme catalyses aldehydo-D-ribose 5-phosphate = D-ribulose 5-phosphate. It functions in the pathway carbohydrate degradation; pentose phosphate pathway; D-ribose 5-phosphate from D-ribulose 5-phosphate (non-oxidative stage): step 1/1. Catalyzes the reversible conversion of ribose-5-phosphate to ribulose 5-phosphate. The sequence is that of Ribose-5-phosphate isomerase A from Bacillus cereus (strain ZK / E33L).